We begin with the raw amino-acid sequence, 1132 residues long: SNF2 domain-containing protein CLASSY 4 (1132 aa).

4 disordered regions span residues 24–104 (NKSK…SKSF), 224–331 (LRGE…HHKK), 376–396 (DPVV…PRER), and 525–544 (PSVN…LPNR). Positions 47-54 (KRRVNMRD) match the Nuclear localization signal motif. Basic and acidic residues predominate over residues 81-90 (EYPEGKRDDE). Over residues 92–103 (VGSTSGNLQSKS) the composition is skewed to polar residues. A compositionally biased stretch (low complexity) spans 233–242 (SDEVVSLSSS). Positions 243-254 (SDDEEDPLEELG) are enriched in acidic residues. Over residues 255–269 (TDSREEVSGEDRDSG) the composition is skewed to basic and acidic residues. 2 stretches are compositionally biased toward acidic residues: residues 270 to 282 (ESDM…DSDS) and 291 to 309 (DSSD…EDEE). Basic and acidic residues-rich tracts occupy residues 310–326 (GGTR…SEKV), 376–392 (DPVV…EHGK), and 525–539 (PSVN…RKGD). Residues 603-796 (SVGVKGSGGC…SNVLCLARPA (194 aa)) form the Helicase ATP-binding domain. Residue 616 to 623 (HKAGTGKT) participates in ATP binding. Positions 747–750 (DEGH) match the DEAH box motif. Residues 934 to 1087 (DFIRISGTVK…ELVFSSTNEK (154 aa)) form the Helicase C-terminal domain.

This sequence belongs to the SNF2/RAD54 helicase family. Interacts with NRPD1.

It localises to the nucleus. Its function is as follows. Probable chromatin remodeling factor. The sequence is that of SNF2 domain-containing protein CLASSY 4 (CLSY4) from Arabidopsis thaliana (Mouse-ear cress).